A 727-amino-acid polypeptide reads, in one-letter code: MSEQKVKLMEEEMNVYRVQGFTCANCAGKFEKNVKKIPGVQDAKVNFGASKIDVYGNASVEELEKAGAFENLKVSPEKLANQTIQRVKDDTKAHKEEKTPFYKKHSTLLFATLLIAFGYLSHFVNGEDNLVTSMLFVGSIVIGGYSLFKVGFQNLIRFDFDMKTLMTVAVIGATIIGKWAEASIVVILFAISEALERFSMDRSRQSIRSLMDIAPKEALVRRNGQEIIIHVDDIAVGDIMIVKPGEKIAMDGIIVNGLSAVNQAAITGESVPVSKAVDDEVFAGTLNEEGLIEVKITKYVEDTTITKIIHLVEEAQGERAPAQAFVDKFAKYYTPIIMVIAALVAVVPPLFFGGSWDTWVYQGLAVLVVGCPCALVISTPISIVSAIGNAAKKGVLVKGGVYLEKLGAIKTVAFDKTGTLTKGVPVVTDFEVLNDQVEEKELFSIITALEYRSQHPLASAIMKKAEQDNIPYSNVQVEEFTSITGRGIKGIVNGTTYYIGSPKLFKELNVSDFSLGFENNVKILQNQGKTAMIIGTEKTILGVIAVADEVRETSKNVIQKLHQLGIKQTIMLTGDNQGTANAIGTHVGVSDIQSELMPQDKLDYIKKMQSEYDNVAMIGDGVNDAPALAASTVGIAMGGAGTDTAIETADIALMGDDLSKLPFAVRLSRKTLNIIKANITFAIGIKIIALLLVIPGWLTLWIAILSDMGATILVALNSLRLMRVKDK.

Positions 12-75 (EMNVYRVQGF…AGAFENLKVS (64 aa)) constitute an HMA domain. Cd(2+) contacts are provided by Cys23 and Cys26. Helical transmembrane passes span 106-126 (STLL…FVNG), 130-150 (LVTS…LFKV), 171-191 (IGAT…LFAI), 336-356 (IIMV…GGSW), and 364-384 (LAVL…ISIV). The active-site 4-aspartylphosphate intermediate is the Asp415. The next 2 helical transmembrane spans lie at 672 to 694 (LNII…LLVI) and 699 to 721 (TLWI…SLRL).

The protein belongs to the cation transport ATPase (P-type) (TC 3.A.3) family. Type IB subfamily.

The protein localises to the cell membrane. The enzyme catalyses Cd(2+)(in) + ATP + H2O = Cd(2+)(out) + ADP + phosphate + H(+). Inhibited by the antibiotic bafilomycin A1. Partially inhibited by DCCD, nigericin and FCCP. Couples the hydrolysis of ATP with the export of cadmium. Involved in cadmium resistance. The protein is Cadmium-transporting ATPase of Staphylococcus aureus.